A 344-amino-acid chain; its full sequence is Fructose-bisphosphate aldolase (344 aa).

Serine 53 is a D-glyceraldehyde 3-phosphate binding site. Aspartate 95 acts as the Proton donor in catalysis. Zn(2+) is bound by residues histidine 96, aspartate 131, glutamate 161, and histidine 212. Glycine 213 is a binding site for dihydroxyacetone phosphate. Histidine 252 serves as a coordination point for Zn(2+). Dihydroxyacetone phosphate-binding positions include 253 to 255 and 274 to 277; these read GGS and NVDT.

It belongs to the class II fructose-bisphosphate aldolase family. It depends on Zn(2+) as a cofactor.

The catalysed reaction is beta-D-fructose 1,6-bisphosphate = D-glyceraldehyde 3-phosphate + dihydroxyacetone phosphate. It functions in the pathway carbohydrate degradation; glycolysis; D-glyceraldehyde 3-phosphate and glycerone phosphate from D-glucose: step 4/4. Functionally, catalyzes the aldol condensation of dihydroxyacetone phosphate (DHAP or glycerone-phosphate) with glyceraldehyde 3-phosphate (G3P) to form fructose 1,6-bisphosphate (FBP) in gluconeogenesis and the reverse reaction in glycolysis. The sequence is that of Fructose-bisphosphate aldolase (fba) from Corynebacterium glutamicum (strain ATCC 13032 / DSM 20300 / JCM 1318 / BCRC 11384 / CCUG 27702 / LMG 3730 / NBRC 12168 / NCIMB 10025 / NRRL B-2784 / 534).